We begin with the raw amino-acid sequence, 319 residues long: 4-hydroxy-3-methylbut-2-enyl diphosphate reductase (319 aa).

Cysteine 12 is a binding site for [4Fe-4S] cluster. (2E)-4-hydroxy-3-methylbut-2-enyl diphosphate is bound by residues histidine 41 and histidine 74. Residues histidine 41 and histidine 74 each contribute to the dimethylallyl diphosphate site. Isopentenyl diphosphate-binding residues include histidine 41 and histidine 74. Cysteine 97 lines the [4Fe-4S] cluster pocket. A (2E)-4-hydroxy-3-methylbut-2-enyl diphosphate-binding site is contributed by histidine 125. Histidine 125 provides a ligand contact to dimethylallyl diphosphate. Residue histidine 125 coordinates isopentenyl diphosphate. Glutamate 127 (proton donor) is an active-site residue. Residue threonine 168 coordinates (2E)-4-hydroxy-3-methylbut-2-enyl diphosphate. Residue cysteine 198 participates in [4Fe-4S] cluster binding. 4 residues coordinate (2E)-4-hydroxy-3-methylbut-2-enyl diphosphate: serine 226, serine 227, asparagine 228, and serine 270. Positions 226, 227, 228, and 270 each coordinate dimethylallyl diphosphate. The isopentenyl diphosphate site is built by serine 226, serine 227, asparagine 228, and serine 270.

The protein belongs to the IspH family. In terms of assembly, homodimer. It depends on [4Fe-4S] cluster as a cofactor.

The enzyme catalyses isopentenyl diphosphate + 2 oxidized [2Fe-2S]-[ferredoxin] + H2O = (2E)-4-hydroxy-3-methylbut-2-enyl diphosphate + 2 reduced [2Fe-2S]-[ferredoxin] + 2 H(+). It carries out the reaction dimethylallyl diphosphate + 2 oxidized [2Fe-2S]-[ferredoxin] + H2O = (2E)-4-hydroxy-3-methylbut-2-enyl diphosphate + 2 reduced [2Fe-2S]-[ferredoxin] + 2 H(+). It participates in isoprenoid biosynthesis; dimethylallyl diphosphate biosynthesis; dimethylallyl diphosphate from (2E)-4-hydroxy-3-methylbutenyl diphosphate: step 1/1. Its pathway is isoprenoid biosynthesis; isopentenyl diphosphate biosynthesis via DXP pathway; isopentenyl diphosphate from 1-deoxy-D-xylulose 5-phosphate: step 6/6. In terms of biological role, catalyzes the conversion of 1-hydroxy-2-methyl-2-(E)-butenyl 4-diphosphate (HMBPP) into a mixture of isopentenyl diphosphate (IPP) and dimethylallyl diphosphate (DMAPP). Acts in the terminal step of the DOXP/MEP pathway for isoprenoid precursor biosynthesis. The sequence is that of 4-hydroxy-3-methylbut-2-enyl diphosphate reductase from Hamiltonella defensa subsp. Acyrthosiphon pisum (strain 5AT).